A 92-amino-acid polypeptide reads, in one-letter code: Small ribosomal subunit protein uS19c (92 aa).

The protein belongs to the universal ribosomal protein uS19 family.

Its subcellular location is the plastid. The protein localises to the chloroplast. Protein S19 forms a complex with S13 that binds strongly to the 16S ribosomal RNA. The protein is Small ribosomal subunit protein uS19c of Populus alba (White poplar).